Here is a 611-residue protein sequence, read N- to C-terminus: Phosphomethylpyrimidine synthase (611 aa).

Residues N212, M241, Y270, H306, 326–328, 367–370, and E406 each bind substrate; these read SRG and DGLR. H410 contributes to the Zn(2+) binding site. Y433 serves as a coordination point for substrate. Residue H474 participates in Zn(2+) binding. 3 residues coordinate [4Fe-4S] cluster: C554, C557, and C562.

This sequence belongs to the ThiC family. As to quaternary structure, homodimer. It depends on [4Fe-4S] cluster as a cofactor.

The enzyme catalyses 5-amino-1-(5-phospho-beta-D-ribosyl)imidazole + S-adenosyl-L-methionine = 4-amino-2-methyl-5-(phosphooxymethyl)pyrimidine + CO + 5'-deoxyadenosine + formate + L-methionine + 3 H(+). The protein operates within cofactor biosynthesis; thiamine diphosphate biosynthesis. Functionally, catalyzes the synthesis of the hydroxymethylpyrimidine phosphate (HMP-P) moiety of thiamine from aminoimidazole ribotide (AIR) in a radical S-adenosyl-L-methionine (SAM)-dependent reaction. This chain is Phosphomethylpyrimidine synthase, found in Bartonella bacilliformis (strain ATCC 35685 / KC583 / Herrer 020/F12,63).